Reading from the N-terminus, the 112-residue chain is Larval cuticle protein 4 (112 aa).

Positions Met1–Ala16 are cleaved as a signal peptide. The Chitin-binding type R&amp;R domain maps to Ala31–Pro92.

Functionally, component of the larval cuticle. In Drosophila melanogaster (Fruit fly), this protein is Larval cuticle protein 4 (Lcp4).